Reading from the N-terminus, the 221-residue chain is Translation initiation factor 6 (221 aa).

It belongs to the eIF-6 family.

Functionally, binds to the 50S ribosomal subunit and prevents its association with the 30S ribosomal subunit to form the 70S initiation complex. The polypeptide is Translation initiation factor 6 (Methanocella arvoryzae (strain DSM 22066 / NBRC 105507 / MRE50)).